The primary structure comprises 421 residues: Putative B3 domain-containing protein Os08g0333500 (421 aa).

The TF-B3 DNA-binding region spans 1 to 51; the sequence is MTVELEKIAGSFFISKGWKTFVHRTGLLSGQYIRFQVLTPSKINVLLFDKK. The tract at residues 92–121 is disordered; it reads SHTSNKETSSDSRTESMTDIPSSSDNSGET. Over residues 95-107 the composition is skewed to basic and acidic residues; it reads SNKETSSDSRTES. Polar residues predominate over residues 108 to 121; it reads MTDIPSSSDNSGET.

The protein localises to the nucleus. The sequence is that of Putative B3 domain-containing protein Os08g0333500 from Oryza sativa subsp. japonica (Rice).